The chain runs to 498 residues: Angiopoietin-1 (498 aa).

Positions 1–15 are cleaved as a signal peptide; the sequence is MTVFLSFAFLAAILT. The stretch at 81–119 forms a coiled coil; the sequence is QKLQHLEHVMENYTQWLQKLENYIVENMKSEMAQIQQNA. 5 N-linked (GlcNAc...) asparagine glycosylation sites follow: Asn92, Asn122, Asn154, Asn243, and Asn295. Residues 153-261 adopt a coiled-coil conformation; the sequence is LNQTSRLEIQ…LELMDTVHNL (109 aa). Residues 277-497 enclose the Fibrinogen C-terminal domain; that stretch reads REEEKPFRDC…STTMMIRPLD (221 aa). Cystine bridges form between Cys286–Cys315 and Cys439–Cys452.

As to quaternary structure, homooligomer. Interacts with TEK/TIE2. Interacts with SVEP1/polydom. Interacts with THBD; this interaction significantly inhibits the generation of activated PC and TAFIa/CPB2 by the thrombin/thrombomodulin complex. Post-translationally, glycosylated.

It is found in the secreted. Its function is as follows. Binds and activates TEK/TIE2 receptor by inducing its dimerization and tyrosine phosphorylation. Plays an important role in the regulation of angiogenesis, endothelial cell survival, proliferation, migration, adhesion and cell spreading, reorganization of the actin cytoskeleton, but also maintenance of vascular quiescence. Required for normal angiogenesis and heart development during embryogenesis. After birth, activates or inhibits angiogenesis, depending on the context. Inhibits angiogenesis and promotes vascular stability in quiescent vessels, where endothelial cells have tight contacts. In quiescent vessels, ANGPT1 oligomers recruit TEK to cell-cell contacts, forming complexes with TEK molecules from adjoining cells, and this leads to preferential activation of phosphatidylinositol 3-kinase and the AKT1 signaling cascades. In migrating endothelial cells that lack cell-cell adhesions, ANGT1 recruits TEK to contacts with the extracellular matrix, leading to the formation of focal adhesion complexes, activation of PTK2/FAK and of the downstream kinases MAPK1/ERK2 and MAPK3/ERK1, and ultimately to the stimulation of sprouting angiogenesis. Mediates blood vessel maturation/stability. Implicated in endothelial developmental processes later and distinct from that of VEGF. Appears to play a crucial role in mediating reciprocal interactions between the endothelium and surrounding matrix and mesenchyme. The sequence is that of Angiopoietin-1 (ANGPT1) from Homo sapiens (Human).